The following is a 93-amino-acid chain: Small ribosomal subunit protein bS6 (93 aa).

This sequence belongs to the bacterial ribosomal protein bS6 family.

Functionally, binds together with bS18 to 16S ribosomal RNA. The sequence is that of Small ribosomal subunit protein bS6 (rpsF) from Treponema pallidum (strain Nichols).